Here is a 361-residue protein sequence, read N- to C-terminus: Phosphoserine aminotransferase (361 aa).

Arginine 42 contributes to the L-glutamate binding site. Residues 76–77, tryptophan 102, threonine 152, aspartate 172, and glutamine 195 each bind pyridoxal 5'-phosphate; that span reads AT. Lysine 196 is modified (N6-(pyridoxal phosphate)lysine). Pyridoxal 5'-phosphate is bound at residue 237–238; it reads NT.

The protein belongs to the class-V pyridoxal-phosphate-dependent aminotransferase family. SerC subfamily. As to quaternary structure, homodimer. Pyridoxal 5'-phosphate serves as cofactor.

The protein resides in the cytoplasm. The catalysed reaction is O-phospho-L-serine + 2-oxoglutarate = 3-phosphooxypyruvate + L-glutamate. It catalyses the reaction 4-(phosphooxy)-L-threonine + 2-oxoglutarate = (R)-3-hydroxy-2-oxo-4-phosphooxybutanoate + L-glutamate. It functions in the pathway amino-acid biosynthesis; L-serine biosynthesis; L-serine from 3-phospho-D-glycerate: step 2/3. It participates in cofactor biosynthesis; pyridoxine 5'-phosphate biosynthesis; pyridoxine 5'-phosphate from D-erythrose 4-phosphate: step 3/5. Functionally, catalyzes the reversible conversion of 3-phosphohydroxypyruvate to phosphoserine and of 3-hydroxy-2-oxo-4-phosphonooxybutanoate to phosphohydroxythreonine. In Xanthomonas axonopodis pv. citri (strain 306), this protein is Phosphoserine aminotransferase.